A 1042-amino-acid chain; its full sequence is SWI/SNF-related matrix-associated actin-dependent regulator of chromatin subfamily A member 1 (1042 aa).

The segment at 25–82 is disordered; it reads EDEQPGPSTSQEEGAAAAATEATAATEKGEKKKEKNVSSFQLKLAAKAPKSEKEMDPE. Residues 36 to 50 are compositionally biased toward low complexity; it reads EEGAAAAATEATAAT. 2 stretches are compositionally biased toward basic and acidic residues: residues 51-60 and 73-82; these read EKGEKKKEKN and PKSEKEMDPE. 2 positions are modified to phosphoserine: Ser-116 and Ser-119. Residues 195 to 360 form the Helicase ATP-binding domain; the sequence is ISLYENGVNG…WALLNFLLPD (166 aa). ATP is bound at residue 208–215; sequence DEMGLGKT. Residues 311 to 314 carry the DEAH box motif; sequence DEAH. Residues 490-641 enclose the Helicase C-terminal domain; sequence VLDKLLAKLK…SIVIQQGRLI (152 aa). Residues Lys-650, Lys-716, and Lys-738 each participate in a glycyl lysine isopeptide (Lys-Gly) (interchain with G-Cter in SUMO2) cross-link. Residues 819-849 form a disordered region; it reads EQKKIDGAEPLTPEETEEKEKLLTQGFTNWT. The segment covering 828-837 has biased composition (basic and acidic residues); the sequence is PLTPEETEEK. Residues 843–895 enclose the SANT 1 domain; sequence QGFTNWTKRDFNQFIKANEKYGRDDIDNIAREVEGKSPEEVMEYSAVFWERCN. Tyr-942 carries the phosphotyrosine modification. An SANT 2 domain is found at 946 to 1010; it reads KGKNYTEEED…QRRCNTLISL (65 aa).

Belongs to the SNF2/RAD54 helicase family. ISWI subfamily. As to quaternary structure, may form homodimers. Component of the ACF-1 ISWI chromatin remodeling complex at least composed of SMARCA1 and BAZ1A, which regulates the spacing of histone octamers on the DNA template to facilitate access to DNA. Within the complex interacts with BAZ1A; the interaction is direct. Component of the WICH-1 ISWI chromatin remodeling complex at least composed of SMARCA1 and BAZ1B/WSTF. Within the complex interacts with BAZ1B/WSTF. Component of the NoRC-1 ISWI chromatin remodeling complex at least composed of SMARCA1 and BAZ2A/TIP5. Within the complex interacts with BAZ2A/TIP5. Component of the BRF-1 ISWI chromatin remodeling complex at least composed of SMARCA1 and BAZ2B. Within the complex interacts with BAZ2B. Component of the NURF-1 ISWI chromatin remodeling complex (also called the nucleosome-remodeling factor (NURF) complex) at least composed of SMARCA1, BPTF, RBBP4 and RBBP7. Within the complex interacts with BPTF. Within the complex interacts with RBBP4 and RBBP7. Component of the CERF-1 ISWI chromatin remodeling complex (also called the CECR2-containing-remodeling factor (CERF) complex) at least composed of CECR2 and SMARCA1. LUZP1 is detected as part of the CERF-1 complex in embryonic stem cells where it is involved in complex stabilization but is not detected in the complex in the testis. Component of the RSF-1 ISWI chromatin remodeling complex at least composed of SMARCA1 and RSF1. Within the complex interacts with RSF1. Interacts with PRLR. Interacts with ERCC6. In terms of assembly, may form homodimers. Component of the BPFT-SMARCA1 complex at least composed of SMARCA1, BPFT, RBBP4 and RBBP7; the complex is catalytically inactive and does not remodel chromatin. Within the complex interacts with BPTF, RBBP4 and RBBP7. Component of the BAZ1A-1-SMARCA1 complex at least composed of SMARCA1 and BAZ1A; the complex is catalytically inactive and does not remodel chromatin. Component of the BAZ1B-1-SMARCA1 complex at least composed of SMARCA1 and BAZ1B; the complex is catalytically inactive and does not remodel chromatin. Expressed in lung, breast, kidney, ovary, skeletal muscle and brain. As to expression, mainly expressed in non-neuronal tissues such as lung, breast, kidney, and ovary.

The protein resides in the nucleus. It is found in the chromosome. It carries out the reaction ATP + H2O = ADP + phosphate + H(+). Functionally, ATPase that possesses intrinsic ATP-dependent chromatin-remodeling activity. ATPase activity is substrate-dependent, and is increased when nucleosomes are the substrate, but is also catalytically active when DNA alone is the substrate. Catalytic subunit of ISWI chromatin-remodeling complexes, which form ordered nucleosome arrays on chromatin and facilitate access to DNA during DNA-templated processes such as DNA replication, transcription, and repair. Within the ISWI chromatin-remodeling complexes, slides edge- and center-positioned histone octamers away from their original location on the DNA template. Catalytic activity and histone octamer sliding propensity is regulated and determined by components of the ISWI chromatin-remodeling complexes. The BAZ1A-, BAZ1B-, BAZ2A- and BAZ2B-containing ISWI chromatin-remodeling complexes regulate the spacing of nucleosomes along the chromatin and have the ability to slide mononucleosomes to the center of a DNA template. The CECR2- and RSF1-containing ISWI chromatin-remodeling complexes do not have the ability to slide mononucleosomes to the center of a DNA template. Within the NURF-1 and CERF-1 ISWI chromatin remodeling complexes, nucleosomes are the preferred substrate for its ATPase activity. Within the NURF-1 ISWI chromatin-remodeling complex, binds to the promoters of En1 and En2 to positively regulate their expression and promote brain development. May promote neurite outgrowth. May be involved in the development of luteal cells. Facilitates nucleosome assembly during DNA replication, ensuring replication fork progression and genomic stability by preventing replication stress and nascent DNA gaps. In terms of biological role, catalytically inactive when either DNA or nucleosomes are the substrate and does not possess chromatin-remodeling activity. Acts as a negative regulator of chromatin remodelers by generating inactive complexes. In Homo sapiens (Human), this protein is SWI/SNF-related matrix-associated actin-dependent regulator of chromatin subfamily A member 1.